A 95-amino-acid chain; its full sequence is Small ribosomal subunit protein uS14 (95 aa).

It belongs to the universal ribosomal protein uS14 family. Part of the 30S ribosomal subunit. Contacts proteins S3 and S10.

Binds 16S rRNA, required for the assembly of 30S particles and may also be responsible for determining the conformation of the 16S rRNA at the A site. The chain is Small ribosomal subunit protein uS14 from Fusobacterium nucleatum subsp. nucleatum (strain ATCC 25586 / DSM 15643 / BCRC 10681 / CIP 101130 / JCM 8532 / KCTC 2640 / LMG 13131 / VPI 4355).